The primary structure comprises 134 residues: Histone H2A (134 aa).

Residues 1–11 (MTGGGKSGGKA) are compositionally biased toward gly residues. The segment at 1–25 (MTGGGKSGGKASGSKNAQSRSSKAG) is disordered. N6-acetyllysine occurs at positions 6 and 10. Residue glutamine 107 is modified to N5-methylglutamine. A Phosphoserine modification is found at serine 131. The short motif at 131–132 (SQ) is the [ST]-Q motif element.

It belongs to the histone H2A family. The nucleosome is a histone octamer containing two molecules each of H2A, H2B, H3 and H4 assembled in one H3-H4 heterotetramer and two H2A-H2B heterodimers. The octamer wraps approximately 147 bp of DNA. Post-translationally, phosphorylated to form H2AS128ph (gamma-H2A) in response to DNA double-strand breaks (DSBs) generated by exogenous genotoxic agents and by stalled replication forks. Phosphorylation is dependent on the DNA damage checkpoint kinases mec-1/ATR and tel-1/ATM, spreads on either side of a detected DSB site and may mark the surrounding chromatin for recruitment of proteins required for DNA damage signaling and repair. Gamma-H2A is removed from the DNA prior to the strand invasion-primer extension step of the repair process and subsequently dephosphorylated. Dephosphorylation is necessary for efficient recovery from the DNA damage checkpoint. Acetylated by esa-1 to form H2AK4ac and H2AK7ac.

The protein resides in the nucleus. It is found in the chromosome. In terms of biological role, core component of nucleosome which plays a central role in DNA double strand break (DSB) repair. Nucleosomes wrap and compact DNA into chromatin, limiting DNA accessibility to the cellular machineries which require DNA as a template. Histones thereby play a central role in transcription regulation, DNA repair, DNA replication and chromosomal stability. DNA accessibility is regulated via a complex set of post-translational modifications of histones, also called histone code, and nucleosome remodeling. In Neurospora crassa (strain ATCC 24698 / 74-OR23-1A / CBS 708.71 / DSM 1257 / FGSC 987), this protein is Histone H2A (hh2a).